A 180-amino-acid polypeptide reads, in one-letter code: MDNHGILESLLFTAGDEGLDEKQLLEILDMSKDQLVELIENYSSHGLMIQRFGTTYVLTTKKEAATYIEQLIEQKSQMKLSQAAMEVLSIIAYNQPLSRSDIELIRSINSDGAVKTLIAKGLVEAKVVNEQRSQQLITTDLFLNVFGISNIEDLPTTEEDDEEMDAFFSNLVNQKGENND.

The protein belongs to the ScpB family. Homodimer. Homodimerization may be required to stabilize the binding of ScpA to the Smc head domains. Component of a cohesin-like complex composed of ScpA, ScpB and the Smc homodimer, in which ScpA and ScpB bind to the head domain of Smc. The presence of the three proteins is required for the association of the complex with DNA.

The protein localises to the cytoplasm. Participates in chromosomal partition during cell division. May act via the formation of a condensin-like complex containing Smc and ScpA that pull DNA away from mid-cell into both cell halves. The protein is Segregation and condensation protein B of Staphylococcus aureus (strain Mu3 / ATCC 700698).